Here is a 721-residue protein sequence, read N- to C-terminus: Glycine--tRNA ligase beta subunit (721 aa).

Belongs to the class-II aminoacyl-tRNA synthetase family. In terms of assembly, tetramer of two alpha and two beta subunits.

The protein localises to the cytoplasm. The enzyme catalyses tRNA(Gly) + glycine + ATP = glycyl-tRNA(Gly) + AMP + diphosphate. The polypeptide is Glycine--tRNA ligase beta subunit (Sinorhizobium fredii (strain NBRC 101917 / NGR234)).